The following is a 153-amino-acid chain: Small ribosomal subunit protein uS19A (153 aa).

Belongs to the universal ribosomal protein uS19 family. Component of the small ribosomal subunit (SSU). Mature yeast ribosomes consist of a small (40S) and a large (60S) subunit. The 40S small subunit contains 1 molecule of ribosomal RNA (18S rRNA) and at least 33 different proteins. The large 60S subunit contains 3 rRNA molecules (25S, 5.8S and 5S rRNA) and at least 46 different proteins.

It localises to the cytoplasm. The protein resides in the nucleus. Its subcellular location is the nucleolus. Functionally, component of the ribosome, a large ribonucleoprotein complex responsible for the synthesis of proteins in the cell. The small ribosomal subunit (SSU) binds messenger RNAs (mRNAs) and translates the encoded message by selecting cognate aminoacyl-transfer RNA (tRNA) molecules. The large subunit (LSU) contains the ribosomal catalytic site termed the peptidyl transferase center (PTC), which catalyzes the formation of peptide bonds, thereby polymerizing the amino acids delivered by tRNAs into a polypeptide chain. The nascent polypeptides leave the ribosome through a tunnel in the LSU and interact with protein factors that function in enzymatic processing, targeting, and the membrane insertion of nascent chains at the exit of the ribosomal tunnel. uS19 is involved in the nuclear export of the small ribosomal subunit precursor. Has a role in the late stage of the assembly of pre-40S particles within the nucleus and controls their export to the cytoplasm. The sequence is that of Small ribosomal subunit protein uS19A (rps1501) from Schizosaccharomyces pombe (strain 972 / ATCC 24843) (Fission yeast).